A 217-amino-acid chain; its full sequence is Large ribosomal subunit protein uL1 (217 aa).

It belongs to the universal ribosomal protein uL1 family. In terms of assembly, part of the 50S ribosomal subunit.

Functionally, binds directly to 23S rRNA. Probably involved in E site tRNA release. Its function is as follows. Protein L1 is also a translational repressor protein, it controls the translation of its operon by binding to its mRNA. The sequence is that of Large ribosomal subunit protein uL1 from Thermoplasma acidophilum (strain ATCC 25905 / DSM 1728 / JCM 9062 / NBRC 15155 / AMRC-C165).